The sequence spans 500 residues: L-arabinose isomerase (500 aa).

Residues E306, E333, H350, and H450 each contribute to the Mn(2+) site.

Belongs to the arabinose isomerase family. As to quaternary structure, homohexamer. Mn(2+) is required as a cofactor.

The catalysed reaction is beta-L-arabinopyranose = L-ribulose. It participates in carbohydrate degradation; L-arabinose degradation via L-ribulose; D-xylulose 5-phosphate from L-arabinose (bacterial route): step 1/3. Functionally, catalyzes the conversion of L-arabinose to L-ribulose. The chain is L-arabinose isomerase from Salmonella paratyphi A (strain ATCC 9150 / SARB42).